A 286-amino-acid chain; its full sequence is tRNA dimethylallyltransferase (286 aa).

An interaction with substrate tRNA region spans residues 18 to 21; it reads DSMQ.

Belongs to the IPP transferase family. In terms of assembly, monomer. The cofactor is Mg(2+).

The enzyme catalyses adenosine(37) in tRNA + dimethylallyl diphosphate = N(6)-dimethylallyladenosine(37) in tRNA + diphosphate. Catalyzes the transfer of a dimethylallyl group onto the adenine at position 37 in tRNAs that read codons beginning with uridine, leading to the formation of N6-(dimethylallyl)adenosine (i(6)A). This chain is tRNA dimethylallyltransferase, found in Tropheryma whipplei (strain TW08/27) (Whipple's bacillus).